Reading from the N-terminus, the 391-residue chain is 3-demethoxyubiquinol 3-hydroxylase (391 aa).

The protein belongs to the UbiH/COQ6 family. Component of the Ubi complex metabolon, which regroups five ubiquinone biosynthesis proteins (UbiE, UbiF, UbiG, UbiH and UbiI) and two accessory factors (UbiK and the lipid-binding protein UbiJ). FAD is required as a cofactor.

It localises to the cytoplasm. The catalysed reaction is a 5-methoxy-2-methyl-3-(all-trans-polyprenyl)benzene-1,4-diol + AH2 + O2 = a 3-demethylubiquinol + A + H2O. It participates in cofactor biosynthesis; ubiquinone biosynthesis. In terms of biological role, catalyzes the hydroxylation of 2-octaprenyl-3-methyl-6-methoxy-1,4-benzoquinol during ubiquinone biosynthesis. This Escherichia coli (strain K12) protein is 3-demethoxyubiquinol 3-hydroxylase (ubiF).